The chain runs to 254 residues: Cytokine-inducible SH2-containing protein (254 aa).

An SH2 domain is found at 82–188 (WYWGSITASE…ATTPALPTPK (107 aa)). The disordered stretch occupies residues 171 to 195 (TRSDSPDLATTPALPTPKEDAPGDP). An SOCS box domain is found at 205-253 (KLVQPFVRRSSTRSLQHLCRLVINRLVVDVDCLPLPRRMADYLRQYPFQ).

As to quaternary structure, stably associated with the tyrosine-phosphorylated IL3 receptor beta chain and tyrosine-phosphorylated EPO receptor (EPOR).

It participates in protein modification; protein ubiquitination. Functionally, SOCS family proteins form part of a classical negative feedback system that regulates cytokine signal transduction. CIS is involved in the negative regulation of cytokines that signal through the JAK-STAT5 pathway such as erythropoietin, prolactin and interleukin 3 (IL3) receptor. Inhibits STAT5 trans-activation by suppressing its tyrosine phosphorylation. May be a substrate recognition component of a SCF-like ECS (Elongin BC-CUL2/5-SOCS-box protein) E3 ubiquitin-protein ligase complex which mediates the ubiquitination and subsequent proteasomal degradation of target proteins. This chain is Cytokine-inducible SH2-containing protein (CISH), found in Bos taurus (Bovine).